The chain runs to 596 residues: UvrABC system protein C (596 aa).

The region spanning 16 to 95 (SSPGVYRFYS…IKENKPKYNV (80 aa)) is the GIY-YIG domain. Residues 209–244 (SSVKKYYQEKMLSAAEDMQFEKAQFFKERYNSVLGL) form the UVR domain.

This sequence belongs to the UvrC family. Interacts with UvrB in an incision complex.

The protein localises to the cytoplasm. In terms of biological role, the UvrABC repair system catalyzes the recognition and processing of DNA lesions. UvrC both incises the 5' and 3' sides of the lesion. The N-terminal half is responsible for the 3' incision and the C-terminal half is responsible for the 5' incision. The polypeptide is UvrABC system protein C (Cytophaga hutchinsonii (strain ATCC 33406 / DSM 1761 / CIP 103989 / NBRC 15051 / NCIMB 9469 / D465)).